Consider the following 468-residue polypeptide: Glutamate--tRNA ligase 2 (468 aa).

Residues 9–19 (PSPTGSLHLGG) carry the 'HIGH' region motif. The 'KMSKS' region signature appears at 238-242 (KLSKR). Residue K241 participates in ATP binding.

This sequence belongs to the class-I aminoacyl-tRNA synthetase family. Glutamate--tRNA ligase type 1 subfamily. As to quaternary structure, monomer.

It localises to the cytoplasm. It carries out the reaction tRNA(Glu) + L-glutamate + ATP = L-glutamyl-tRNA(Glu) + AMP + diphosphate. Functionally, catalyzes the attachment of glutamate to tRNA(Glu) in a two-step reaction: glutamate is first activated by ATP to form Glu-AMP and then transferred to the acceptor end of tRNA(Glu). This chain is Glutamate--tRNA ligase 2, found in Anaplasma phagocytophilum (strain HZ).